The primary structure comprises 297 residues: UDP-N-acetylenolpyruvoylglucosamine reductase (297 aa).

One can recognise an FAD-binding PCMH-type domain in the interval 18-184; sequence QVGGPAEWYL…LSARLRLAPG (167 aa). Residue R163 is part of the active site. S214 functions as the Proton donor in the catalytic mechanism. Residue E285 is part of the active site.

It depends on FAD as a cofactor.

The protein localises to the cytoplasm. It carries out the reaction UDP-N-acetyl-alpha-D-muramate + NADP(+) = UDP-N-acetyl-3-O-(1-carboxyvinyl)-alpha-D-glucosamine + NADPH + H(+). It functions in the pathway cell wall biogenesis; peptidoglycan biosynthesis. Cell wall formation. This is UDP-N-acetylenolpyruvoylglucosamine reductase from Gloeobacter violaceus (strain ATCC 29082 / PCC 7421).